The following is a 347-amino-acid chain: Quinolinate synthase (347 aa).

2 residues coordinate iminosuccinate: H47 and S68. C113 contributes to the [4Fe-4S] cluster binding site. Iminosuccinate contacts are provided by residues 139–141 (YAN) and S156. C200 is a binding site for [4Fe-4S] cluster. Iminosuccinate contacts are provided by residues 226-228 (HPE) and T243. C297 contacts [4Fe-4S] cluster.

The protein belongs to the quinolinate synthase family. Type 1 subfamily. It depends on [4Fe-4S] cluster as a cofactor.

The protein resides in the cytoplasm. The catalysed reaction is iminosuccinate + dihydroxyacetone phosphate = quinolinate + phosphate + 2 H2O + H(+). It participates in cofactor biosynthesis; NAD(+) biosynthesis; quinolinate from iminoaspartate: step 1/1. Its function is as follows. Catalyzes the condensation of iminoaspartate with dihydroxyacetone phosphate to form quinolinate. This is Quinolinate synthase from Shigella boydii serotype 4 (strain Sb227).